A 576-amino-acid chain; its full sequence is Putative export ATP-binding/permease protein RC1073 (576 aa).

Positions L20–L303 constitute an ABC transmembrane type-1 domain. Transmembrane regions (helical) follow at residues I21–F41, V57–F77, F135–F155, F158–F178, A242–I262, and I277–L297. The 237-residue stretch at I336–E572 folds into the ABC transporter domain. G371 to S378 provides a ligand contact to ATP.

The protein belongs to the ABC transporter superfamily. In terms of assembly, homodimer.

It is found in the cell inner membrane. Part of an ABC transporter complex. Transmembrane domains (TMD) form a pore in the inner membrane and the ATP-binding domain (NBD) is responsible for energy generation. In Rickettsia conorii (strain ATCC VR-613 / Malish 7), this protein is Putative export ATP-binding/permease protein RC1073.